An 83-amino-acid polypeptide reads, in one-letter code: Small ribosomal subunit protein bS16 (83 aa).

This sequence belongs to the bacterial ribosomal protein bS16 family.

The chain is Small ribosomal subunit protein bS16 from Aromatoleum aromaticum (strain DSM 19018 / LMG 30748 / EbN1) (Azoarcus sp. (strain EbN1)).